We begin with the raw amino-acid sequence, 206 residues long: Thiamine-phosphate synthase (206 aa).

4-amino-2-methyl-5-(diphosphooxymethyl)pyrimidine contacts are provided by residues 38 to 42 (QLREK) and Asn-70. Mg(2+) contacts are provided by Asp-71 and Asp-90. Thr-109 contacts 4-amino-2-methyl-5-(diphosphooxymethyl)pyrimidine. 135 to 137 (TST) serves as a coordination point for 2-[(2R,5Z)-2-carboxy-4-methylthiazol-5(2H)-ylidene]ethyl phosphate. Position 138 (Lys-138) interacts with 4-amino-2-methyl-5-(diphosphooxymethyl)pyrimidine. 2-[(2R,5Z)-2-carboxy-4-methylthiazol-5(2H)-ylidene]ethyl phosphate is bound by residues Gly-165 and 185-186 (VS).

This sequence belongs to the thiamine-phosphate synthase family. Mg(2+) serves as cofactor.

It carries out the reaction 2-[(2R,5Z)-2-carboxy-4-methylthiazol-5(2H)-ylidene]ethyl phosphate + 4-amino-2-methyl-5-(diphosphooxymethyl)pyrimidine + 2 H(+) = thiamine phosphate + CO2 + diphosphate. The enzyme catalyses 2-(2-carboxy-4-methylthiazol-5-yl)ethyl phosphate + 4-amino-2-methyl-5-(diphosphooxymethyl)pyrimidine + 2 H(+) = thiamine phosphate + CO2 + diphosphate. The catalysed reaction is 4-methyl-5-(2-phosphooxyethyl)-thiazole + 4-amino-2-methyl-5-(diphosphooxymethyl)pyrimidine + H(+) = thiamine phosphate + diphosphate. It participates in cofactor biosynthesis; thiamine diphosphate biosynthesis; thiamine phosphate from 4-amino-2-methyl-5-diphosphomethylpyrimidine and 4-methyl-5-(2-phosphoethyl)-thiazole: step 1/1. Condenses 4-methyl-5-(beta-hydroxyethyl)thiazole monophosphate (THZ-P) and 2-methyl-4-amino-5-hydroxymethyl pyrimidine pyrophosphate (HMP-PP) to form thiamine monophosphate (TMP). The protein is Thiamine-phosphate synthase of Fusobacterium nucleatum subsp. nucleatum (strain ATCC 25586 / DSM 15643 / BCRC 10681 / CIP 101130 / JCM 8532 / KCTC 2640 / LMG 13131 / VPI 4355).